We begin with the raw amino-acid sequence, 445 residues long: Protein phosphatase 2C 53 (445 aa).

The region spanning 124–435 (LWGLESICGR…DNITVVVIDL (312 aa)) is the PPM-type phosphatase domain. Mn(2+) contacts are provided by Asp-180, Gly-181, Asp-362, and Asp-426.

The protein belongs to the PP2C family. Interacts with PYL10, SAPK8 and SAPK10. Binding to PYL10 is dependent on the presence of abscisic acid (ABA). Interacts with PYL3, PYL5, PYL9 and PYL10. Binding to PYL9 and PYL10 is dependent on the presence of ABA. Mg(2+) serves as cofactor. It depends on Mn(2+) as a cofactor. In terms of tissue distribution, expressed in leaf blades, leaf sheaths and lamina joints. Expressed at low levels in roots, stems, flowers and panicles.

Its subcellular location is the cytoplasm. The protein localises to the cytosol. It is found in the nucleus. It carries out the reaction O-phospho-L-seryl-[protein] + H2O = L-seryl-[protein] + phosphate. It catalyses the reaction O-phospho-L-threonyl-[protein] + H2O = L-threonyl-[protein] + phosphate. With respect to regulation, repressed by abscisic acid-bound PYL1. Protein phosphatase that acts as a negative regulator of abscisic acid (ABA) signaling. Involved in the regulation of root architecture development and drought resistance. Can dephosphorylate SAPK8 and SAPK10 in vitro. Together with PYL10, SAPK8 and SAPK10, may form an ABA signaling module involved in stress response. This is Protein phosphatase 2C 53 from Oryza sativa subsp. japonica (Rice).